We begin with the raw amino-acid sequence, 192 residues long: MAREREGRRRDDREERDSEFVDKLVHINRVAKVVKGGRRFGFAALVVVGDQKGRVGFGHGKAREVPEAIRKATEAAKRGLIRVSLREGRTLHHDVNGRHGAGKVILRAAPQGTGIIAGGPMRAVFETLGMQDVVAKSLGSSNPYNLVRATFDALKNEDSPRSVAARRGLKVSALQARRRDADPADTSDAAVA.

Residues 20–83 enclose the S5 DRBM domain; sequence FVDKLVHINR…EAAKRGLIRV (64 aa). The tract at residues 162 to 192 is disordered; it reads SVAARRGLKVSALQARRRDADPADTSDAAVA.

The protein belongs to the universal ribosomal protein uS5 family. Part of the 30S ribosomal subunit. Contacts proteins S4 and S8.

Functionally, with S4 and S12 plays an important role in translational accuracy. Its function is as follows. Located at the back of the 30S subunit body where it stabilizes the conformation of the head with respect to the body. In Methylorubrum populi (strain ATCC BAA-705 / NCIMB 13946 / BJ001) (Methylobacterium populi), this protein is Small ribosomal subunit protein uS5.